Here is a 142-residue protein sequence, read N- to C-terminus: Large ribosomal subunit protein uL13 (142 aa).

The protein belongs to the universal ribosomal protein uL13 family. As to quaternary structure, part of the 50S ribosomal subunit.

Its function is as follows. This protein is one of the early assembly proteins of the 50S ribosomal subunit, although it is not seen to bind rRNA by itself. It is important during the early stages of 50S assembly. This is Large ribosomal subunit protein uL13 from Pseudomonas syringae pv. tomato (strain ATCC BAA-871 / DC3000).